The following is a 145-amino-acid chain: Methylglyoxal synthase (145 aa).

In terms of domain architecture, MGS-like spans 1–145; that stretch reads MNSKKKIALV…YYQKIRKDNF (145 aa). Substrate contacts are provided by residues histidine 12, lysine 16, 38-41, and 58-59; these read TGTT and SG. Catalysis depends on aspartate 64, which acts as the Proton donor/acceptor. Substrate is bound at residue histidine 91.

The protein belongs to the methylglyoxal synthase family.

The catalysed reaction is dihydroxyacetone phosphate = methylglyoxal + phosphate. Its function is as follows. Catalyzes the formation of methylglyoxal from dihydroxyacetone phosphate. In Clostridium acetobutylicum (strain ATCC 824 / DSM 792 / JCM 1419 / IAM 19013 / LMG 5710 / NBRC 13948 / NRRL B-527 / VKM B-1787 / 2291 / W), this protein is Methylglyoxal synthase.